We begin with the raw amino-acid sequence, 253 residues long: MNGPIIMTREERMKIVHEIKERILDKYGDDVKAIGVYGSLGRQTDGPYSDIEMMCVMSTEEAEFSHEWTTGEWKVEVNFDSEEILLDYASQVESDWPLTHGQFFSILPIYDSGGYLEKVYQTAKSVEAQTFHDAICALIVEELFEYAGKWRNIRVQGPTTFLPSLTVQVAMAGAMLIGLHHRICYTTSASVLTEAVKQSDLPSGYDHLCQFVMSGQLSDSEKLLESLENFWNGIQEWTERHGYIVDVSKRIPF.

The tract at residues 1–127 (MNGPIIMTRE…KVYQTAKSVE (127 aa)) is N-terminal domain. The ATP site is built by S39, R42, S49, D50, and E52. The Mg(2+) site is built by D50 and E52. Residues E52 and E67 each coordinate neomycin B. The kanamycin A site is built by E67, K74, E76, E141, and E145. Positions 128 to 241 (AQTFHDAICA…NGIQEWTERH (114 aa)) are C-terminal domain. Residues E145, K149, and T187 each contribute to the ATP site. E145 serves as a coordination point for Mg(2+). Residue E145 is the Proton acceptor of the active site.

As to quaternary structure, homodimer. Mg(2+) is required as a cofactor.

It catalyses the reaction amikacin + ATP = 4'-adenylylamikacin + diphosphate. The catalysed reaction is kanamycin A + ATP = 4'-adenylylkanamycin A + diphosphate. The enzyme catalyses neomycin B + ATP = 4'-adenylylneomycin B + diphosphate. It carries out the reaction paromomycin + ATP = 4'-adenylylparomomycin + diphosphate. It catalyses the reaction ribostamycin + ATP = 4'-adenylylribostamycin + diphosphate. The catalysed reaction is tobramycin + ATP = 4'-adenylyltobramycin + diphosphate. The enzyme catalyses kanamycin A + CTP = 4'-cytidylylkanamycin A + diphosphate. It carries out the reaction kanamycin A + GTP = 4'-guanylylkanamycin A + diphosphate. It catalyses the reaction kanamycin A + ITP = 4'-inosinylylkanamycin A + diphosphate. The catalysed reaction is dTTP + kanamycin A = 4'-thymidylylkanamycin A + diphosphate. The enzyme catalyses kanamycin A + UTP = 4'-uridylylkanamycin A + diphosphate. It carries out the reaction kanamycin A + dATP = 4'-(2'-deoxyadenylyl)kanamycin A + diphosphate. It catalyses the reaction kanamycin A + dCTP = 4'-(2'-deoxycytidylyl)kanamycin A + diphosphate. The catalysed reaction is kanamycin A + dGTP = 4'-(2'-deoxyguanylyl)kanamycin A + diphosphate. The enzyme catalyses dUTP + kanamycin A = 4'-(2'-deoxyuridylyl)kanamycin A + diphosphate. It carries out the reaction amikacin + GTP = 4'-guanylylamikacin + diphosphate. It catalyses the reaction amikacin + ITP = 4'-inosinylylamikacin + diphosphate. The catalysed reaction is amikacin + CTP = 4'-cytidylylamikacin + diphosphate. The enzyme catalyses amikacin + UTP = 4'-uridylylamikacin + diphosphate. It carries out the reaction amikacin + dTTP = 4'-thymidylylamikacin + diphosphate. In terms of biological role, inactivates aminoglycoside antibiotics such as kanamycin by catalyzing the transfer of a nucleotidyl group from a wide variety of nucleoside triphosphates ((d)ATP, (d)CTP, (d)GTP, ITP, TTP and (d)UTP) to the 4'-hydroxyl group of the aminoglycoside. In vitro, antibiotics without the 4'-hydroxyl but possessing a 4''-hydroxyl group (e.g. sisomicin and gentamicin) are also modifed but with poor specificity. The 3' position of the NTP ribose ring does not tolerate large substitutions (e.g. ddATP) and dNTPs and TTP are better substrates than their NTP counterparts. A short (2.35 Angstrom) hydrogen bond initially facilitates tight binding of the substrate (between Glu-52 and antibiotic) that is subsequently disrupted by the assembly of the active ternary complex. This enables the release of products post-catalysis, a 'catch and release' mechanism. This chain is Aminoglycoside nucleotidyltransferase (4') (knt), found in Staphylococcus aureus.